The primary structure comprises 107 residues: Replication initiation control protein YabA (107 aa).

Zn(2+)-binding residues include His-81, Cys-83, Cys-97, and Cys-100.

The protein belongs to the YabA family. As to quaternary structure, homotetramer. Interacts with both DnaA and DnaN, acting as a bridge between these two proteins. Requires Zn(2+) as cofactor.

The protein localises to the cytoplasm. It is found in the nucleoid. Its function is as follows. Involved in control of chromosome replication initiation. Inhibits the cooperative binding of DnaA to the oriC region, thus negatively regulating initiation of chromosome replication. Inhibits the ability of DnaA-ATP to form a helix on DNA; does not disassemble preformed DnaA-DNA helices. Decreases the residence time of DnaA on the chromosome at its binding sites (oriC, replication forks and promoter-binding sites). Tethers DnaA to the replication machinery via the DNA polymerase beta sliding clamp subunit (dnaN). Associates with oriC and other DnaA targets on the chromosome in a DnaA-dependent manner. This chain is Replication initiation control protein YabA, found in Streptococcus equi subsp. zooepidemicus (strain MGCS10565).